We begin with the raw amino-acid sequence, 472 residues long: Eukaryotic translation initiation factor 2 subunit 3, Y-linked (472 aa).

Alanine 2 is subject to N-acetylalanine. Position 16 is a phosphoserine (serine 16). The tr-type G domain occupies 39-247 (QATINIGTIG…YIVKKIPVPL (209 aa)). The tract at residues 48–55 (GHVAHGKS) is G1. 51 to 56 (AHGKST) lines the GTP pocket. The interval 76-80 (NITIK) is G2. The interval 134 to 137 (DCPG) is G3. Residues 190-193 (NKID) and 225-227 (SAQ) each bind GTP. Residues 190–193 (NKID) are G4. The G5 stretch occupies residues 225-227 (SAQ).

It belongs to the TRAFAC class translation factor GTPase superfamily. Classic translation factor GTPase family. EIF2G subfamily. As to quaternary structure, eIF2 is a heterotrimer composed of an alpha (EIF2S1), a beta (EIF2S2) and a gamma (Eif2s3x and Eif2s3y) chain. eIF2 is member of the 43S pre-initiation complex (43S PIC). As to expression, widely expressed in males.

The catalysed reaction is GTP + H2O = GDP + phosphate + H(+). Its function is as follows. Member of the eIF2 complex that functions in the early steps of protein synthesis by forming a ternary complex with GTP and initiator tRNA. This complex binds to a 40S ribosomal subunit, followed by mRNA binding to form the 43S pre-initiation complex (43S PIC). Junction of the 60S ribosomal subunit to form the 80S initiation complex is preceded by hydrolysis of the GTP bound to eIF2 and release of an eIF2-GDP binary complex. In order for eIF2 to recycle and catalyze another round of initiation, the GDP bound to eIF2 must exchange with GTP by way of a reaction catalyzed by eIF-2B. Along with its paralog on chromosome X, may contribute to spermatogenesis up to the round spermatid stage. The protein is Eukaryotic translation initiation factor 2 subunit 3, Y-linked (Eif2s3y) of Rattus norvegicus (Rat).